We begin with the raw amino-acid sequence, 387 residues long: 3-ketoacyl-CoA thiolase (387 aa).

The active-site Acyl-thioester intermediate is Cys-91. Catalysis depends on proton acceptor residues His-343 and Cys-373.

The protein belongs to the thiolase-like superfamily. Thiolase family. Heterotetramer of two alpha chains (FadB) and two beta chains (FadA).

Its subcellular location is the cytoplasm. It catalyses the reaction an acyl-CoA + acetyl-CoA = a 3-oxoacyl-CoA + CoA. It functions in the pathway lipid metabolism; fatty acid beta-oxidation. Functionally, catalyzes the final step of fatty acid oxidation in which acetyl-CoA is released and the CoA ester of a fatty acid two carbons shorter is formed. This Shigella boydii serotype 4 (strain Sb227) protein is 3-ketoacyl-CoA thiolase.